The sequence spans 264 residues: Enhancer of mRNA-decapping protein 1 (264 aa).

2 disordered regions span residues 1-180 (MLAQ…FSTI) and 193-264 (YNNP…LRDY). Positions 63 to 74 (GKKSTSKPKSKS) are enriched in basic residues. Over residues 83–92 (NFKLTASPSL) the composition is skewed to polar residues. The span at 108–118 (PSPPPPPPPST) shows a compositional bias: pro residues. 3 stretches are compositionally biased toward low complexity: residues 119–134 (QPST…RTST), 161–172 (NGKKPNFFNNNN), and 208–226 (NNNN…NSNS). Residues 248-264 (FKSNNGSPRQSSGLRDY) show a composition bias toward polar residues.

Belongs to the EDC family.

It is found in the cytoplasm. Its function is as follows. mRNA-binding protein which stimulates mRNA decapping. The chain is Enhancer of mRNA-decapping protein 1 (EDC1) from Candida albicans (strain SC5314 / ATCC MYA-2876) (Yeast).